A 226-amino-acid chain; its full sequence is Cytidylate kinase (226 aa).

10 to 18 (GPASSGKST) is an ATP binding site.

It belongs to the cytidylate kinase family. Type 1 subfamily.

It is found in the cytoplasm. It catalyses the reaction CMP + ATP = CDP + ADP. The enzyme catalyses dCMP + ATP = dCDP + ADP. The sequence is that of Cytidylate kinase from Streptococcus pyogenes serotype M18 (strain MGAS8232).